Here is a 516-residue protein sequence, read N- to C-terminus: DNA-(apurinic or apyrimidinic site) endonuclease 2 (516 aa).

Mg(2+) is bound by residues Asn-8 and Glu-47. Tyr-155 is an active-site residue. Mg(2+) contacts are provided by Asp-196, Asn-198, Asp-302, and His-303. Catalysis depends on Asp-196, which acts as the Proton donor/acceptor. The active-site Proton acceptor is the His-303. A compositionally biased stretch (polar residues) spans 357–366; sequence QPSHQIQAQR. Residues 357 to 389 form a disordered region; sequence QPSHQIQAQRQPRKACMHSTRLRKSQGGPKRKQ. Residues 367–389 show a composition bias toward basic residues; sequence QPRKACMHSTRLRKSQGGPKRKQ. Lys-370 participates in a covalent cross-link: Glycyl lysine isopeptide (Lys-Gly) (interchain with G-Cter in ubiquitin). The required for the interaction and colocalization with PCNA in nuclear foci in presence of oxidative-induced DNA damaging agents stretch occupies residues 389-396; that stretch reads QKNLMSYF. 4 residues coordinate Zn(2+): Cys-467, His-470, Cys-493, and Cys-507. A GRF-type zinc finger spans residues 467–516; it reads CGGHREPCVMRTVKKTGPNFGRQFYMCARPRGPPSDPSSRCNFFLWSRPS.

This sequence belongs to the DNA repair enzymes AP/ExoA family. As to quaternary structure, interacts with PCNA. This interaction is increased by misincorporation of uracil in nuclear DNA. Mg(2+) serves as cofactor. The cofactor is Mn(2+). In terms of processing, ubiquitinated by the CUL9-RBX1 complex. Ubiquitinated by MKRN3 at Lys-370 leading to proteasomal degradation. In terms of tissue distribution, expressed in lymphocytes, thymocytes and splenocytes (at protein level). Highly expressed in the thymus and weakly expressed in the bone marrow, spleen, eye, kidney, lung, brain and uterus.

The protein resides in the nucleus. Its subcellular location is the cytoplasm. It localises to the mitochondrion. The catalysed reaction is Exonucleolytic cleavage in the 3'- to 5'-direction to yield nucleoside 5'-phosphates.. Its activity is regulated as follows. 3'-5' exonuclease activity is activated by sodium and manganese. 3'-5' exonuclease and 3'-phosphodiesterase activities are stimulated in presence of PCNA. In terms of biological role, functions as a weak apurinic/apyrimidinic (AP) endodeoxyribonuclease in the DNA base excision repair (BER) pathway of DNA lesions induced by oxidative and alkylating agents. Initiates repair of AP sites in DNA by catalyzing hydrolytic incision of the phosphodiester backbone immediately adjacent to the damage, generating a single-strand break with 5'-deoxyribose phosphate and 3'-hydroxyl ends. Also displays double-stranded DNA 3'-5' exonuclease, 3'-phosphodiesterase activities. Shows robust 3'-5' exonuclease activity on 3'-recessed heteroduplex DNA and is able to remove mismatched nucleotides preferentially. Shows fairly strong 3'-phosphodiesterase activity involved in the removal of 3'-damaged termini formed in DNA by oxidative agents. In the nucleus functions in the PCNA-dependent BER pathway. Plays a role in reversing blocked 3' DNA ends, problematic lesions that preclude DNA synthesis. Required for somatic hypermutation (SHM) and DNA cleavage step of class switch recombination (CSR) of immunoglobulin genes. Required for proper cell cycle progression during proliferation of peripheral lymphocytes. This is DNA-(apurinic or apyrimidinic site) endonuclease 2 (Apex2) from Mus musculus (Mouse).